The primary structure comprises 249 residues: ATP synthase subunit a (249 aa).

5 consecutive transmembrane segments (helical) span residues 33 to 53 (GQVIAVSWIVFAILIIASIAA), 92 to 112 (LPFIGTLFLFIFVSNWLGALI), 131 to 151 (INTTVALALLTSLAYFYAGIS), 196 to 216 (LVVAVLVFLVPLVVPLPLMAL), and 217 to 237 (GLFTSAIQALVFATLAGAYIH).

It belongs to the ATPase A chain family. As to quaternary structure, F-type ATPases have 2 components, CF(1) - the catalytic core - and CF(0) - the membrane proton channel. CF(1) has five subunits: alpha(3), beta(3), gamma(1), delta(1), epsilon(1). CF(0) has four main subunits: a, b, b' and c.

It is found in the cellular thylakoid membrane. Key component of the proton channel; it plays a direct role in the translocation of protons across the membrane. The chain is ATP synthase subunit a from Microcystis aeruginosa (strain NIES-843 / IAM M-2473).